Here is a 181-residue protein sequence, read N- to C-terminus: Crossover junction endodeoxyribonuclease RuvC (181 aa).

Catalysis depends on residues Asp7, Glu67, and Asp139. The Mg(2+) site is built by Asp7, Glu67, and Asp139.

Belongs to the RuvC family. In terms of assembly, homodimer which binds Holliday junction (HJ) DNA. The HJ becomes 2-fold symmetrical on binding to RuvC with unstacked arms; it has a different conformation from HJ DNA in complex with RuvA. In the full resolvosome a probable DNA-RuvA(4)-RuvB(12)-RuvC(2) complex forms which resolves the HJ. Requires Mg(2+) as cofactor.

The protein resides in the cytoplasm. It catalyses the reaction Endonucleolytic cleavage at a junction such as a reciprocal single-stranded crossover between two homologous DNA duplexes (Holliday junction).. Functionally, the RuvA-RuvB-RuvC complex processes Holliday junction (HJ) DNA during genetic recombination and DNA repair. Endonuclease that resolves HJ intermediates. Cleaves cruciform DNA by making single-stranded nicks across the HJ at symmetrical positions within the homologous arms, yielding a 5'-phosphate and a 3'-hydroxyl group; requires a central core of homology in the junction. The consensus cleavage sequence is 5'-(A/T)TT(C/G)-3'. Cleavage occurs on the 3'-side of the TT dinucleotide at the point of strand exchange. HJ branch migration catalyzed by RuvA-RuvB allows RuvC to scan DNA until it finds its consensus sequence, where it cleaves and resolves the cruciform DNA. This chain is Crossover junction endodeoxyribonuclease RuvC, found in Cupriavidus taiwanensis (strain DSM 17343 / BCRC 17206 / CCUG 44338 / CIP 107171 / LMG 19424 / R1) (Ralstonia taiwanensis (strain LMG 19424)).